The sequence spans 150 residues: Small ribosomal subunit protein eS19S (150 aa).

The protein belongs to the eukaryotic ribosomal protein eS19 family.

This chain is Small ribosomal subunit protein eS19S (RPS19S), found in Ascaris suum (Pig roundworm).